Reading from the N-terminus, the 96-residue chain is uncharacterized protein (96 aa).

An N-terminal signal peptide occupies residues 1-15 (MRLFILLVALFVICA).

This is an uncharacterized protein from Caenorhabditis elegans.